We begin with the raw amino-acid sequence, 89 residues long: MKRIGAKKKPVYRIVVTDSRSRRDGAVIEEIGFYDPRANTEKGLPEVTLDVEAARRWLSHGARPSETVQGLLKRAQVYASPSSSTPDSD.

It belongs to the bacterial ribosomal protein bS16 family.

This is Small ribosomal subunit protein bS16 from Gloeobacter violaceus (strain ATCC 29082 / PCC 7421).